We begin with the raw amino-acid sequence, 179 residues long: CASP-like protein 1F1 (179 aa).

Topologically, residues 1–16 (MENVEDKYNSPLKSQK) are cytoplasmic. Residues 17 to 37 (LFIGAQICLRIVTIGATLAAT) form a helical membrane-spanning segment. Over 38 to 65 (WIMVTDKQSITFGDFVMVAKYNYSSAFK) the chain is Extracellular. Residue Asn59 is glycosylated (N-linked (GlcNAc...) asparagine). Residues 66 to 86 (FFVLANVIACACSVVSLLFLC) form a helical membrane-spanning segment. The Cytoplasmic segment spans residues 87-105 (ALGRYSSNPGHVFLLFLHD). The chain crosses the membrane as a helical span at residues 106 to 126 (LLMMSLVLAGCSAATAIGFLG). Topologically, residues 127–150 (KYGNTKSGWMPICDQFGQFCNRGT) are extracellular. A helical membrane pass occupies residues 151 to 171 (ISMMLSYLSMVCLLILTVTSA). At 172–179 (NKSRQIHV) the chain is on the cytoplasmic side.

It belongs to the Casparian strip membrane proteins (CASP) family. As to quaternary structure, homodimer and heterodimers.

The protein localises to the cell membrane. The sequence is that of CASP-like protein 1F1 from Ricinus communis (Castor bean).